The sequence spans 208 residues: MVEWIEIQYPIEYGEAYKMMKSRLTGILNGTASEAVFILEHQDVYTAGISAKNDELLNCYDIPVHHTDRGGKFTYHGPGQIIIYPVINLAVNGRVKDIRNYVNNLASLVINSLKFFNITGITVQDTIGVWIDSEFGRKKIASIGVRIHKWITYHGVAINVCPDLKKFKGIIPCGDRDTIVTSISELLDQKIDLDYYKAILKQEFYKIF.

The BPL/LPL catalytic domain occupies Gly30–Phe208. Substrate contacts are provided by residues Arg69–His76, Ser142–Gly144, and Gly155–Ala157. Cys173 functions as the Acyl-thioester intermediate in the catalytic mechanism.

It belongs to the LipB family.

The protein resides in the cytoplasm. The catalysed reaction is octanoyl-[ACP] + L-lysyl-[protein] = N(6)-octanoyl-L-lysyl-[protein] + holo-[ACP] + H(+). The protein operates within protein modification; protein lipoylation via endogenous pathway; protein N(6)-(lipoyl)lysine from octanoyl-[acyl-carrier-protein]: step 1/2. Functionally, catalyzes the transfer of endogenously produced octanoic acid from octanoyl-acyl-carrier-protein onto the lipoyl domains of lipoate-dependent enzymes. Lipoyl-ACP can also act as a substrate although octanoyl-ACP is likely to be the physiological substrate. This is Octanoyltransferase from Orientia tsutsugamushi (strain Ikeda) (Rickettsia tsutsugamushi).